The sequence spans 657 residues: Hemocyanin (657 aa).

Asparagine 167 is a glycosylation site (N-linked (GlcNAc...) asparagine). 6 residues coordinate Cu cation: histidine 194, histidine 198, histidine 224, histidine 344, histidine 348, and histidine 384. Cystine bridges form between cysteine 483/cysteine 502 and cysteine 562/cysteine 609.

It belongs to the tyrosinase family. Hemocyanin subfamily. It consists of at least four very similar subunits. Hemolymph.

It localises to the secreted. It is found in the extracellular space. In terms of biological role, hemocyanins are copper-containing oxygen carriers occurring freely dissolved in the hemolymph of many mollusks and arthropods. This chain is Hemocyanin, found in Palinurus vulgaris (European spiny lobster).